Here is a 261-residue protein sequence, read N- to C-terminus: Cytochrome c oxidase subunit 3 (261 aa).

Residues methionine 1–proline 15 are Mitochondrial matrix-facing. A helical membrane pass occupies residues tryptophan 16 to tryptophan 34. Residues phenylalanine 35–valine 40 lie on the Mitochondrial intermembrane side of the membrane. Residues alanine 41–threonine 66 traverse the membrane as a helical segment. Topologically, residues phenylalanine 67–threonine 72 are mitochondrial matrix. A helical membrane pass occupies residues proline 73–serine 105. Residues leucine 106–glutamate 128 are Mitochondrial intermembrane-facing. The chain crosses the membrane as a helical span at residues valine 129–methionine 152. The Mitochondrial matrix portion of the chain corresponds to glutamate 153–asparagine 155. The chain crosses the membrane as a helical span at residues arginine 156 to glutamate 183. Residues alanine 184–aspartate 190 lie on the Mitochondrial intermembrane side of the membrane. The helical transmembrane segment at glycine 191–leucine 223 threads the bilayer. Over lysine 224–histidine 232 the chain is Mitochondrial matrix. Residues phenylalanine 233–isoleucine 256 traverse the membrane as a helical segment. The Mitochondrial intermembrane portion of the chain corresponds to tyrosine 257 to serine 261.

Belongs to the cytochrome c oxidase subunit 3 family. In terms of assembly, component of the cytochrome c oxidase (complex IV, CIV), a multisubunit enzyme composed of 14 subunits. The complex is composed of a catalytic core of 3 subunits MT-CO1, MT-CO2 and MT-CO3, encoded in the mitochondrial DNA, and 11 supernumerary subunits COX4I, COX5A, COX5B, COX6A, COX6B, COX6C, COX7A, COX7B, COX7C, COX8 and NDUFA4, which are encoded in the nuclear genome. The complex exists as a monomer or a dimer and forms supercomplexes (SCs) in the inner mitochondrial membrane with NADH-ubiquinone oxidoreductase (complex I, CI) and ubiquinol-cytochrome c oxidoreductase (cytochrome b-c1 complex, complex III, CIII), resulting in different assemblies (supercomplex SCI(1)III(2)IV(1) and megacomplex MCI(2)III(2)IV(2)).

Its subcellular location is the mitochondrion inner membrane. The enzyme catalyses 4 Fe(II)-[cytochrome c] + O2 + 8 H(+)(in) = 4 Fe(III)-[cytochrome c] + 2 H2O + 4 H(+)(out). In terms of biological role, component of the cytochrome c oxidase, the last enzyme in the mitochondrial electron transport chain which drives oxidative phosphorylation. The respiratory chain contains 3 multisubunit complexes succinate dehydrogenase (complex II, CII), ubiquinol-cytochrome c oxidoreductase (cytochrome b-c1 complex, complex III, CIII) and cytochrome c oxidase (complex IV, CIV), that cooperate to transfer electrons derived from NADH and succinate to molecular oxygen, creating an electrochemical gradient over the inner membrane that drives transmembrane transport and the ATP synthase. Cytochrome c oxidase is the component of the respiratory chain that catalyzes the reduction of oxygen to water. Electrons originating from reduced cytochrome c in the intermembrane space (IMS) are transferred via the dinuclear copper A center (CU(A)) of subunit 2 and heme A of subunit 1 to the active site in subunit 1, a binuclear center (BNC) formed by heme A3 and copper B (CU(B)). The BNC reduces molecular oxygen to 2 water molecules using 4 electrons from cytochrome c in the IMS and 4 protons from the mitochondrial matrix. The polypeptide is Cytochrome c oxidase subunit 3 (MT-CO3) (Nanger dama (Dama gazelle)).